A 337-amino-acid polypeptide reads, in one-letter code: Heat-inducible transcription repressor HrcA (337 aa).

This sequence belongs to the HrcA family.

Negative regulator of class I heat shock genes (grpE-dnaK-dnaJ and groELS operons). Prevents heat-shock induction of these operons. The protein is Heat-inducible transcription repressor HrcA of Pseudarthrobacter chlorophenolicus (strain ATCC 700700 / DSM 12829 / CIP 107037 / JCM 12360 / KCTC 9906 / NCIMB 13794 / A6) (Arthrobacter chlorophenolicus).